The sequence spans 558 residues: MLLDKLSVLSFLGLAPIFAAAQLSGSVGPLTSASTKAATKTCNVLDYGAKADKSTDLGAPLASAFADCKSGGLVYVPSGDYALSTWARLSGGEAWALQIDGIIYRTGTDGGNMIYIEHSSDFELFSSTSEGAMQGLGYEFHADDNWSGPRLLRLYEVTDFSVHDFILVDSPSFHFSLDTCTNGEIYNMAIRGGNHGGLDGIDVWSNNIWVHDVEVTNKDECVTVKGPSKNILIESIYCNWSGGCGMGSFGSDTNVSDITYRNIYTWSSNNMMLIKSNGGSGFVENVLLENFIGHGNAYSLDIDSYWASMSAVDGDGVQLSNITVKNWKGTEAYGAERGPVKVVCADGAPCYDITIEDFAMWTEEGDSQWYSCESAYGSGYCLQDSDDHVSYSVTTSTVSSAPSGYSATSMAADLTTDFGSTVSIPIPTIPTSFYPGATPYSALMANSASTAAASSIASHATVHSSSASVAASVPSAVAPSESIPAATSAVVSSAAAIAPSPAVGAQEGSTTSAPSFAAPSGAGNSPQGPTGASGFGEKGQQGEQGEQGEQGEQGVCYV.

A signal peptide spans 1–21 (MLLDKLSVLSFLGLAPIFAAA). Residues cysteine 42 and cysteine 68 are joined by a disulfide bond. Asparagine 145 is a glycosylation site (N-linked (GlcNAc...) asparagine). Catalysis depends on aspartate 219, which acts as the Proton donor. Cysteine 221 and cysteine 238 are oxidised to a cystine. Residues asparagine 239 and asparagine 254 are each glycosylated (N-linked (GlcNAc...) asparagine). Histidine 294 is an active-site residue. Asparagine 321 carries N-linked (GlcNAc...) asparagine glycosylation. 2 cysteine pairs are disulfide-bonded: cysteine 344-cysteine 350 and cysteine 372-cysteine 381. Residues 503 to 526 (VGAQEGSTTSAPSFAAPSGAGNSP) are compositionally biased toward low complexity. The tract at residues 503-558 (VGAQEGSTTSAPSFAAPSGAGNSPQGPTGASGFGEKGQQGEQGEQGEQGEQGVCYV) is disordered.

The protein belongs to the glycosyl hydrolase 28 family.

Its subcellular location is the secreted. It catalyses the reaction Endohydrolysis of alpha-D-GalA-(1-&gt;2)-alpha-L-Rha glycosidic bond in the rhamnogalacturonan I backbone with initial inversion of anomeric configuration releasing oligosaccharides with beta-D-GalA at the reducing end.. In terms of biological role, pectinolytic enzymes consist of four classes of enzymes: pectine lyase, polygalacturonase, pectin methylesterase and rhamnogalacturonase. Hydrolyzes alpha-D-galacturonopyranosyl-(1,2)-alpha-L-rhamnopyranosyl linkages in the backbone of the hairy regions of pectins. This chain is Rhamnogalacturonase B (rhgB), found in Aspergillus niger.